We begin with the raw amino-acid sequence, 127 residues long: Large ribosomal subunit protein eL8 (127 aa).

Belongs to the eukaryotic ribosomal protein eL8 family. Part of the 50S ribosomal subunit. Component of box C/D small ribonucleoprotein (sRNP) particles that contain rpl7ae, FlpA and nop5, plus a guide RNA. These sRNP particles form homodimers, giving rise to an asymmetric holoenzyme. Probably part of the RNase P complex.

Its subcellular location is the cytoplasm. Functionally, multifunctional RNA-binding protein that recognizes the K-turn motif in ribosomal RNA, the RNA component of RNase P, box H/ACA, box C/D and box C'/D' sRNAs. This is Large ribosomal subunit protein eL8 from Saccharolobus solfataricus (strain ATCC 35092 / DSM 1617 / JCM 11322 / P2) (Sulfolobus solfataricus).